We begin with the raw amino-acid sequence, 691 residues long: MVRTMPIERVRNIGIAAHIDAGKTTTTERILFYSGIVHKMGEVHYGTAVTDWMAQERERGITITAAAISTKWLDHQINIIDTPGHVDFTIEVERSMRVLDGIIAVFCSVGGVQSQSETVWRQADRYQVPRMAFINKMDRTGANFFKVYEQIRDRLRANAVPIQIPIGSENEFTGIVDLVAMKALIYNDDQGTDIQETEIPADVEKLAQEYRLKLVESVAETDDALTEKYLEGEELTAEEIRKALRLATISGTVVPILCGSAFKNKGIQLLLNAVVDYLPAPQEVPAIQGTLPNGELDVRPADDEAPLASLAFKIMSDPYGRLTFLRVYSGVLAKGSYILNSTKDKKERISRLIVLKADDRIEVDELRAGDLGAVVGLKDTLTGDTICDKDNPIILESLYVPEPVISVAVEPKTKQDIDKLSQALQALSDEDPTFRVSVDPETNQTVIAGMGELHLEILVDRMLREYKVKANVGKPQVAYRETIRQQIQAEGKFIRQSGGKGQYGHVVIELEPGDPGSGFEFVSKIVGGTVPKEFISPAEQGMKEACEAGVLAGYPLIDVKATLVDGSYHDVDSSEMAFKIAGSMAIKEGVIKASPVLLEPMMKVEVEVPEDFIGNIIGDLNSRRGQIEGQGLETGMAKVMAKVPLAEMFGYATDMRSKTQGRGVFSMEFSNYEEVPHNVAETIISKSRGYV.

Residues 8-282 (ERVRNIGIAA…AVVDYLPAPQ (275 aa)) enclose the tr-type G domain. GTP contacts are provided by residues 17–24 (AHIDAGKT), 81–85 (DTPGH), and 135–138 (NKMD).

The protein belongs to the TRAFAC class translation factor GTPase superfamily. Classic translation factor GTPase family. EF-G/EF-2 subfamily.

The protein resides in the cytoplasm. Functionally, catalyzes the GTP-dependent ribosomal translocation step during translation elongation. During this step, the ribosome changes from the pre-translocational (PRE) to the post-translocational (POST) state as the newly formed A-site-bound peptidyl-tRNA and P-site-bound deacylated tRNA move to the P and E sites, respectively. Catalyzes the coordinated movement of the two tRNA molecules, the mRNA and conformational changes in the ribosome. This chain is Elongation factor G 1, found in Trichodesmium erythraeum (strain IMS101).